An 896-amino-acid chain; its full sequence is C-type lectin domain-containing protein 180 (896 aa).

A signal peptide spans 1–18 (MRHLIFTGFVLTLTALEA). The 125-residue stretch at 54–178 (PWGDLYQFRA…CESTSPDHHA (125 aa)) folds into the C-type lectin domain. The N-linked (GlcNAc...) asparagine glycan is linked to N133. C154 and C169 are oxidised to a cystine. N221 and N235 each carry an N-linked (GlcNAc...) asparagine glycan. 4 disordered regions span residues 243–264 (STVK…SVSK), 354–436 (VKQE…LAPE), 492–519 (EKLE…EEQK), and 557–809 (KVKA…TTKP). A compositionally biased stretch (acidic residues) spans 250 to 260 (SEEETSSEEEE). Composition is skewed to basic and acidic residues over residues 354-382 (VKQE…KISE) and 395-406 (DMPKADIEPPKE). Acidic residues predominate over residues 407–426 (EDCDEEGSGSGSGEEDEKDE). Positions 427-436 (SSEKIELAPE) are enriched in basic and acidic residues. 3 stretches are compositionally biased toward basic and acidic residues: residues 575–590 (KSAK…KVGN), 607–663 (QNRE…ETKL), and 683–692 (EEPKSDKDSE). Positions 727–739 (STTTESTTVAVKE) are enriched in low complexity. Residues 740 to 768 (VPVDEIEKIAKLEAKQHTEDEKVTVETKQ) show a composition bias toward basic and acidic residues. Residues 773-809 (TPAPTTSEKTSTTAAPSTKPAEETTTTTEAPSTTTKP) show a composition bias toward low complexity.

The protein localises to the secreted. This is C-type lectin domain-containing protein 180 (clec-180) from Caenorhabditis elegans.